The chain runs to 280 residues: Bifunctional protein FolD (280 aa).

Residues 166-168 and serine 191 contribute to the NADP(+) site; that span reads GRS.

Belongs to the tetrahydrofolate dehydrogenase/cyclohydrolase family. Homodimer.

The catalysed reaction is (6R)-5,10-methylene-5,6,7,8-tetrahydrofolate + NADP(+) = (6R)-5,10-methenyltetrahydrofolate + NADPH. It carries out the reaction (6R)-5,10-methenyltetrahydrofolate + H2O = (6R)-10-formyltetrahydrofolate + H(+). The protein operates within one-carbon metabolism; tetrahydrofolate interconversion. Functionally, catalyzes the oxidation of 5,10-methylenetetrahydrofolate to 5,10-methenyltetrahydrofolate and then the hydrolysis of 5,10-methenyltetrahydrofolate to 10-formyltetrahydrofolate. The protein is Bifunctional protein FolD of Teredinibacter turnerae (strain ATCC 39867 / T7901).